The primary structure comprises 947 residues: Protocadherin alpha-4 (947 aa).

Residues 1-29 form the signal peptide; the sequence is MEFSWGSGQESRRLLLLLLLLAAWEAGNG. 6 Cadherin domains span residues 30 to 133, 134 to 242, 243 to 350, 351 to 455, 456 to 565, and 588 to 678; these read QLHY…PPVF, PATQ…APAF, DRTI…VPDL, EFKS…APAF, AQPE…APAL, and GHVV…APKA. The Extracellular portion of the chain corresponds to 30 to 697; the sequence is QLHYSVSEEA…GPDAALVDVN (668 aa). Cys-96 and Cys-102 are joined by a disulfide. N-linked (GlcNAc...) asparagine glycosylation is found at Asn-139, Asn-257, and Asn-265. Asn-548 carries N-linked (GlcNAc...) asparagine glycosylation. The helical transmembrane segment at 698 to 718 threads the bilayer; sequence VYLIIAICAVSSLLVLTLLLY. The Cytoplasmic segment spans residues 719-947; sequence TALRCSALPT…GNSTTDNSDQ (229 aa). PXXP repeat units follow at residues 734 to 737, 774 to 777, 796 to 799, 829 to 832, 870 to 873, and 888 to 891; these read PGKP, PSLP, PRQP, PGGP, PGNP, and PGSP. Residues 734–891 are 6 X 4 AA repeats of P-X-X-P; sequence PGKPTLVCSS…PDKFIIPGSP (158 aa). Residues 738–947 are required for interaction with FYN; that stretch reads TLVCSSAVGS…GNSTTDNSDQ (210 aa). Disordered regions lie at residues 754–805, 828–853, and 868–947; these read RRPR…DWRY, GPGGPDQQWPTVSSATPEPEAGEVSP, and YGPG…NSDQ. The span at 906–920 shows a compositional bias: basic and acidic residues; that stretch reads DKSDFITFGKKEETK.

As to quaternary structure, forms homodimers in trans (molecules expressed by two different cells). Forms promiscuous heterodimers in cis (at the plasma membrane of the same cell) with other protocadherins. Interacts with FYN.

The protein localises to the cell membrane. Its function is as follows. Calcium-dependent cell-adhesion protein involved in cells self-recognition and non-self discrimination. Thereby, it is involved in the establishment and maintenance of specific neuronal connections in the brain. This is Protocadherin alpha-4 from Homo sapiens (Human).